Consider the following 233-residue polypeptide: Large ribosomal subunit protein mL67 (233 aa).

Residues 214–233 (RQQAQQSEQQSQSELESQTA) are disordered. Over residues 215 to 233 (QQAQQSEQQSQSELESQTA) the composition is skewed to low complexity.

It belongs to the mitochondrion-specific ribosomal protein mL67 family.

It is found in the nucleus. Its subcellular location is the mitochondrion. Its function is as follows. Transcription factor involved in regulation of RNA polymerase II-dependent transcription. Also involved in regulation of mitochondrial DNA recombination, maintenance and repair, and generation of homoplasmic cells. The protein is Large ribosomal subunit protein mL67 (MHR1) of Debaryomyces hansenii (strain ATCC 36239 / CBS 767 / BCRC 21394 / JCM 1990 / NBRC 0083 / IGC 2968) (Yeast).